The sequence spans 218 residues: MKANTKSKKVNKAWLHDHVNDTYVKLAQKEGYRARAAYKLKEIDETLGLIRPGQVVVDLGSAPGAWSQYLRRRMAPAGAAAGQLNGTLIALDILPMEPIEGVTFLQGDFREEDVLARLQEAVQARPVDVVVSDMAPNLSGVESVDAVRIAHLIELAVDFAQQHLKPDGALVVKLFHGSGYAQLVQLFKEHFRTVKPMKPKASRDKSSETFLVGMGLRK.

The S-adenosyl-L-methionine site is built by glycine 64, tryptophan 66, aspartate 92, aspartate 108, and aspartate 133. The active-site Proton acceptor is lysine 173.

It belongs to the class I-like SAM-binding methyltransferase superfamily. RNA methyltransferase RlmE family.

Its subcellular location is the cytoplasm. The enzyme catalyses uridine(2552) in 23S rRNA + S-adenosyl-L-methionine = 2'-O-methyluridine(2552) in 23S rRNA + S-adenosyl-L-homocysteine + H(+). Functionally, specifically methylates the uridine in position 2552 of 23S rRNA at the 2'-O position of the ribose in the fully assembled 50S ribosomal subunit. This chain is Ribosomal RNA large subunit methyltransferase E, found in Paracidovorax citrulli (strain AAC00-1) (Acidovorax citrulli).